Reading from the N-terminus, the 100-residue chain is Urease subunit gamma (100 aa).

This sequence belongs to the urease gamma subunit family. Heterotrimer of UreA (gamma), UreB (beta) and UreC (alpha) subunits. Three heterotrimers associate to form the active enzyme.

It is found in the cytoplasm. The enzyme catalyses urea + 2 H2O + H(+) = hydrogencarbonate + 2 NH4(+). It functions in the pathway nitrogen metabolism; urea degradation; CO(2) and NH(3) from urea (urease route): step 1/1. This chain is Urease subunit gamma, found in Chromohalobacter salexigens (strain ATCC BAA-138 / DSM 3043 / CIP 106854 / NCIMB 13768 / 1H11).